The chain runs to 728 residues: 1,4-alpha-glucan branching enzyme GlgB (728 aa).

Asp-405 serves as the catalytic Nucleophile. Glu-458 functions as the Proton donor in the catalytic mechanism.

It belongs to the glycosyl hydrolase 13 family. GlgB subfamily. In terms of assembly, monomer.

The catalysed reaction is Transfers a segment of a (1-&gt;4)-alpha-D-glucan chain to a primary hydroxy group in a similar glucan chain.. The protein operates within glycan biosynthesis; glycogen biosynthesis. Its function is as follows. Catalyzes the formation of the alpha-1,6-glucosidic linkages in glycogen by scission of a 1,4-alpha-linked oligosaccharide from growing alpha-1,4-glucan chains and the subsequent attachment of the oligosaccharide to the alpha-1,6 position. The sequence is that of 1,4-alpha-glucan branching enzyme GlgB from Shigella flexneri.